The following is a 247-amino-acid chain: MPRYRLLIEYNGGPYQGWMRLPGLQTVQGALEAAAAQLDGGPVEVTGAGRTDAGVHATGQVAHMDLRVDRPNKVADAMNYHLRPHPIAVLKADRVEEDFHARFSAIARHYRYIVINRRAHLTHDQGLAWRVPSRLDADKMHEAAQSFVGTHDFTTFRDSECQALSPVKTLTRLDVARYNDRIEFTCSAPSFIHRQVRSLVGSLVEVGRGRHPVKWAREILEAADRTRCGPVAPSDGLFLERVDYPAG.

D52 acts as the Nucleophile in catalysis. Y110 is a binding site for substrate.

It belongs to the tRNA pseudouridine synthase TruA family. As to quaternary structure, homodimer.

The catalysed reaction is uridine(38/39/40) in tRNA = pseudouridine(38/39/40) in tRNA. Functionally, formation of pseudouridine at positions 38, 39 and 40 in the anticodon stem and loop of transfer RNAs. This Hyphomonas neptunium (strain ATCC 15444) protein is tRNA pseudouridine synthase A.